Reading from the N-terminus, the 434-residue chain is V-type ATP synthase beta chain (434 aa).

Belongs to the ATPase alpha/beta chains family.

Functionally, produces ATP from ADP in the presence of a proton gradient across the membrane. The V-type beta chain is a regulatory subunit. The sequence is that of V-type ATP synthase beta chain from Borrelia garinii subsp. bavariensis (strain ATCC BAA-2496 / DSM 23469 / PBi) (Borreliella bavariensis).